Consider the following 146-residue polypeptide: MAAYLLAVAILFCIQGWPLGTVQGQVMPFMEVYRHSVCQPRETLVSILEEYPGEIAHIFRPSCVTALRCGGCCTDESLECTATGKRSVGREIMRLSPHKGTSEKEVMQFTEHTDCECRPRSASGVNSRKHKRNPEEGEQRAKFPFV.

The first 24 residues, 1-24 (MAAYLLAVAILFCIQGWPLGTVQG), serve as a signal peptide directing secretion. Q25 is subject to Pyrrolidone carboxylic acid. Intrachain disulfides connect C38/C80, C69/C115, and C73/C117. Residues 118–146 (RPRSASGVNSRKHKRNPEEGEQRAKFPFV) are disordered. Residues 133-146 (NPEEGEQRAKFPFV) are compositionally biased toward basic and acidic residues.

This sequence belongs to the PDGF/VEGF growth factor family. Snake venom VEGF subfamily. As to quaternary structure, homodimer; disulfide-linked. Interacts with VEGF receptor-1 (FLT1) with a high affinity, whereas it binds to VEGF receptor-2 (KDR) with a low affinity. Does not bind VEGF receptor-3 (FLT4). In terms of tissue distribution, expressed by the venom gland.

It localises to the secreted. In terms of biological role, snake venom VEGFs that may contribute to venom dispersion and prey subjugation by inducing vascular permeability and hypotension. This protein induces an increase in capillary permeability after intradermal injection, as well as a drastic hypotensive effect after intravenous injection. The hypotension is mediated by nitric oxide (NO), which is produced by VEGF-activated endothelium NO synthase. Also induces angiogenesis in vitro. Like other crotalid VEGFs, this protein interacts with VEGF receptor-1 (FLT1) with a high affinity, whereas it binds to VEGF receptor-2 (KDR) with a low affinity. This is Snake venom vascular endothelial growth factor toxin from Bothrops erythromelas (Caatinga lance head).